The chain runs to 510 residues: NAD(P)H-quinone oxidoreductase subunit 2, chloroplastic (510 aa).

Helical transmembrane passes span 24 to 44 (LLLF…GLIL), 59 to 79 (WFYF…LFRW), 99 to 119 (IFQF…VEYI), 124 to 144 (MAIT…MFLC), 149 to 169 (LITI…LSGY), 183 to 203 (YLLM…WLYG), 229 to 249 (ISIA…PAPF), 295 to 315 (WHLL…LIAI), 323 to 343 (MLAY…IVGD), 354 to 374 (YMLF…LFGL), 395 to 415 (ALSS…AGFF), and 418 to 438 (LHLF…IGLL).

Belongs to the complex I subunit 2 family. In terms of assembly, NDH is composed of at least 16 different subunits, 5 of which are encoded in the nucleus.

Its subcellular location is the plastid. It is found in the chloroplast thylakoid membrane. It carries out the reaction a plastoquinone + NADH + (n+1) H(+)(in) = a plastoquinol + NAD(+) + n H(+)(out). The catalysed reaction is a plastoquinone + NADPH + (n+1) H(+)(in) = a plastoquinol + NADP(+) + n H(+)(out). Functionally, NDH shuttles electrons from NAD(P)H:plastoquinone, via FMN and iron-sulfur (Fe-S) centers, to quinones in the photosynthetic chain and possibly in a chloroplast respiratory chain. The immediate electron acceptor for the enzyme in this species is believed to be plastoquinone. Couples the redox reaction to proton translocation, and thus conserves the redox energy in a proton gradient. The sequence is that of NAD(P)H-quinone oxidoreductase subunit 2, chloroplastic from Ensete ventricosum (Abyssinian banana).